Consider the following 399-residue polypeptide: Tyrosine--tRNA ligase (399 aa).

The 'HIGH' region motif lies at 42-51 (PTAPDLHLGH). The 'KMSKS' region motif lies at 226–230 (KMSKS). Position 229 (Lys229) interacts with ATP. Residues 337-398 (LPVFQVVKQA…GKRKFASVVL (62 aa)) enclose the S4 RNA-binding domain.

Belongs to the class-I aminoacyl-tRNA synthetase family. TyrS type 2 subfamily. As to quaternary structure, homodimer.

It localises to the cytoplasm. The catalysed reaction is tRNA(Tyr) + L-tyrosine + ATP = L-tyrosyl-tRNA(Tyr) + AMP + diphosphate + H(+). In terms of biological role, catalyzes the attachment of tyrosine to tRNA(Tyr) in a two-step reaction: tyrosine is first activated by ATP to form Tyr-AMP and then transferred to the acceptor end of tRNA(Tyr). This Aromatoleum aromaticum (strain DSM 19018 / LMG 30748 / EbN1) (Azoarcus sp. (strain EbN1)) protein is Tyrosine--tRNA ligase.